A 575-amino-acid chain; its full sequence is Proline--tRNA ligase, cytoplasmic (575 aa).

The protein belongs to the class-II aminoacyl-tRNA synthetase family.

Its subcellular location is the cytoplasm. The catalysed reaction is tRNA(Pro) + L-proline + ATP = L-prolyl-tRNA(Pro) + AMP + diphosphate. The chain is Proline--tRNA ligase, cytoplasmic (PRS) from Candida albicans (Yeast).